A 197-amino-acid polypeptide reads, in one-letter code: dITP/XTP pyrophosphatase (197 aa).

9-14 lines the substrate pocket; the sequence is SNNAGK. Aspartate 70 functions as the Proton acceptor in the catalytic mechanism. A Mg(2+)-binding site is contributed by aspartate 70. Residues serine 71, 153-156, lysine 176, and 181-182 contribute to the substrate site; these read FGYD and HR.

It belongs to the HAM1 NTPase family. Homodimer. The cofactor is Mg(2+).

It carries out the reaction XTP + H2O = XMP + diphosphate + H(+). The catalysed reaction is dITP + H2O = dIMP + diphosphate + H(+). The enzyme catalyses ITP + H2O = IMP + diphosphate + H(+). Functionally, pyrophosphatase that catalyzes the hydrolysis of nucleoside triphosphates to their monophosphate derivatives, with a high preference for the non-canonical purine nucleotides XTP (xanthosine triphosphate), dITP (deoxyinosine triphosphate) and ITP. Seems to function as a house-cleaning enzyme that removes non-canonical purine nucleotides from the nucleotide pool, thus preventing their incorporation into DNA/RNA and avoiding chromosomal lesions. The chain is dITP/XTP pyrophosphatase from Chromobacterium violaceum (strain ATCC 12472 / DSM 30191 / JCM 1249 / CCUG 213 / NBRC 12614 / NCIMB 9131 / NCTC 9757 / MK).